The primary structure comprises 454 residues: UPF0210 protein Ppro_0613 (454 aa).

Belongs to the UPF0210 family. In terms of assembly, homodimer.

This chain is UPF0210 protein Ppro_0613, found in Pelobacter propionicus (strain DSM 2379 / NBRC 103807 / OttBd1).